A 132-amino-acid chain; its full sequence is Small ribosomal subunit protein uS8 (132 aa).

The protein belongs to the universal ribosomal protein uS8 family. As to quaternary structure, part of the 30S ribosomal subunit. Contacts proteins S5 and S12.

Functionally, one of the primary rRNA binding proteins, it binds directly to 16S rRNA central domain where it helps coordinate assembly of the platform of the 30S subunit. This Corynebacterium diphtheriae (strain ATCC 700971 / NCTC 13129 / Biotype gravis) protein is Small ribosomal subunit protein uS8.